Here is a 144-residue protein sequence, read N- to C-terminus: Large ribosomal subunit protein uL15 (144 aa).

The disordered stretch occupies residues 1–53; sequence MRLNTLSPAEGAKHNAKRLGRGIGSGLGKTSGRGHKGQKARTGGGVRRGFEGG. Gly residues predominate over residues 21 to 31; it reads RGIGSGLGKTS.

This sequence belongs to the universal ribosomal protein uL15 family. In terms of assembly, part of the 50S ribosomal subunit.

Binds to the 23S rRNA. The chain is Large ribosomal subunit protein uL15 from Histophilus somni (strain 129Pt) (Haemophilus somnus).